A 338-amino-acid chain; its full sequence is D-erythrose-4-phosphate dehydrogenase (338 aa).

Residue 12–13 (RI) coordinates NAD(+). Residues 154 to 156 (SCT), Arg200, 213 to 214 (TK), and Arg236 contribute to the substrate site. Cys155 functions as the Nucleophile in the catalytic mechanism. Asn318 is an NAD(+) binding site.

This sequence belongs to the glyceraldehyde-3-phosphate dehydrogenase family. Epd subfamily. As to quaternary structure, homotetramer.

It localises to the cytoplasm. The catalysed reaction is D-erythrose 4-phosphate + NAD(+) + H2O = 4-phospho-D-erythronate + NADH + 2 H(+). Its pathway is cofactor biosynthesis; pyridoxine 5'-phosphate biosynthesis; pyridoxine 5'-phosphate from D-erythrose 4-phosphate: step 1/5. Catalyzes the NAD-dependent conversion of D-erythrose 4-phosphate to 4-phosphoerythronate. In Yersinia pestis bv. Antiqua (strain Antiqua), this protein is D-erythrose-4-phosphate dehydrogenase.